Reading from the N-terminus, the 488-residue chain is Aspartyl/glutamyl-tRNA(Asn/Gln) amidotransferase subunit B (488 aa).

The protein belongs to the GatB/GatE family. GatB subfamily. In terms of assembly, heterotrimer of A, B and C subunits.

It carries out the reaction L-glutamyl-tRNA(Gln) + L-glutamine + ATP + H2O = L-glutaminyl-tRNA(Gln) + L-glutamate + ADP + phosphate + H(+). It catalyses the reaction L-aspartyl-tRNA(Asn) + L-glutamine + ATP + H2O = L-asparaginyl-tRNA(Asn) + L-glutamate + ADP + phosphate + 2 H(+). Its function is as follows. Allows the formation of correctly charged Asn-tRNA(Asn) or Gln-tRNA(Gln) through the transamidation of misacylated Asp-tRNA(Asn) or Glu-tRNA(Gln) in organisms which lack either or both of asparaginyl-tRNA or glutaminyl-tRNA synthetases. The reaction takes place in the presence of glutamine and ATP through an activated phospho-Asp-tRNA(Asn) or phospho-Glu-tRNA(Gln). The protein is Aspartyl/glutamyl-tRNA(Asn/Gln) amidotransferase subunit B of Chlamydia trachomatis serovar A (strain ATCC VR-571B / DSM 19440 / HAR-13).